The sequence spans 392 residues: HORMA domain-containing protein 1 (392 aa).

The region spanning 25–227 is the HORMA domain; the sequence is QQSLMFVKRL…TPFHTFRLKV (203 aa). Disordered stretches follow at residues 271–292 and 371–392; these read IKTK…EPNL and LESS…NEHT. S374 is subject to Phosphoserine. Residues 381-384 carry the Nuclear localization signal motif; that stretch reads KRRR.

In terms of assembly, interacts with HORMAD2. Interacts with IHO1. In terms of processing, phosphorylated at Ser-375 in a SPO11-dependent manner.

The protein resides in the nucleus. It is found in the chromosome. Functionally, plays a key role in meiotic progression. Regulates 3 different functions during meiosis: ensures that sufficient numbers of processed DNA double-strand breaks (DSBs) are available for successful homology search by increasing the steady-state numbers of single-stranded DSB ends. Promotes synaptonemal-complex formation independently of its role in homology search. Plays a key role in the male mid-pachytene checkpoint and the female meiotic prophase checkpoint: required for efficient build-up of ATR activity on unsynapsed chromosome regions, a process believed to form the basis of meiotic silencing of unsynapsed chromatin (MSUC) and meiotic prophase quality control in both sexes. This chain is HORMA domain-containing protein 1 (Hormad1), found in Rattus norvegicus (Rat).